Reading from the N-terminus, the 201-residue chain is Peptidyl-tRNA hydrolase (201 aa).

Tyr17 is a binding site for tRNA. His22 functions as the Proton acceptor in the catalytic mechanism. Residues Phe76, Asn78, and Asn124 each contribute to the tRNA site.

Belongs to the PTH family. Monomer.

It localises to the cytoplasm. The catalysed reaction is an N-acyl-L-alpha-aminoacyl-tRNA + H2O = an N-acyl-L-amino acid + a tRNA + H(+). Its function is as follows. Hydrolyzes ribosome-free peptidyl-tRNAs (with 1 or more amino acids incorporated), which drop off the ribosome during protein synthesis, or as a result of ribosome stalling. Functionally, catalyzes the release of premature peptidyl moieties from peptidyl-tRNA molecules trapped in stalled 50S ribosomal subunits, and thus maintains levels of free tRNAs and 50S ribosomes. In Oleidesulfovibrio alaskensis (strain ATCC BAA-1058 / DSM 17464 / G20) (Desulfovibrio alaskensis), this protein is Peptidyl-tRNA hydrolase.